The chain runs to 457 residues: ATP-dependent protease ATPase subunit HslU (457 aa).

ATP is bound by residues Val-21, 63–68 (GVGKTE), Asp-269, Glu-335, and Arg-407.

It belongs to the ClpX chaperone family. HslU subfamily. As to quaternary structure, a double ring-shaped homohexamer of HslV is capped on each side by a ring-shaped HslU homohexamer. The assembly of the HslU/HslV complex is dependent on binding of ATP.

It localises to the cytoplasm. Its function is as follows. ATPase subunit of a proteasome-like degradation complex; this subunit has chaperone activity. The binding of ATP and its subsequent hydrolysis by HslU are essential for unfolding of protein substrates subsequently hydrolyzed by HslV. HslU recognizes the N-terminal part of its protein substrates and unfolds these before they are guided to HslV for hydrolysis. The polypeptide is ATP-dependent protease ATPase subunit HslU (Desulfotalea psychrophila (strain LSv54 / DSM 12343)).